The sequence spans 225 residues: Putative ATP-dependent Clp protease proteolytic subunit-like (225 aa).

It belongs to the peptidase S14 family.

Its function is as follows. Has lost the two conserved residues (Ser and His) proposed to be part of the active site. Therefore it could be inactive. This Synechocystis sp. (strain ATCC 27184 / PCC 6803 / Kazusa) protein is Putative ATP-dependent Clp protease proteolytic subunit-like (clpR).